The sequence spans 216 residues: LexA repressor (216 aa).

Positions 28 to 48 form a DNA-binding region, H-T-H motif; it reads RAEIAAEFGFSSPNAAEEHLR. Residues Ser134 and Lys171 each act as for autocatalytic cleavage activity in the active site.

The protein belongs to the peptidase S24 family. Homodimer.

It carries out the reaction Hydrolysis of Ala-|-Gly bond in repressor LexA.. Represses a number of genes involved in the response to DNA damage (SOS response), including recA and lexA. In the presence of single-stranded DNA, RecA interacts with LexA causing an autocatalytic cleavage which disrupts the DNA-binding part of LexA, leading to derepression of the SOS regulon and eventually DNA repair. The polypeptide is LexA repressor (Ralstonia nicotianae (strain ATCC BAA-1114 / GMI1000) (Ralstonia solanacearum)).